The sequence spans 350 residues: Aminomethyltransferase (350 aa).

This sequence belongs to the GcvT family. The glycine cleavage system is composed of four proteins: P, T, L and H.

The catalysed reaction is N(6)-[(R)-S(8)-aminomethyldihydrolipoyl]-L-lysyl-[protein] + (6S)-5,6,7,8-tetrahydrofolate = N(6)-[(R)-dihydrolipoyl]-L-lysyl-[protein] + (6R)-5,10-methylene-5,6,7,8-tetrahydrofolate + NH4(+). Functionally, the glycine cleavage system catalyzes the degradation of glycine. This is Aminomethyltransferase from Aquifex aeolicus (strain VF5).